A 67-amino-acid polypeptide reads, in one-letter code: DNA-directed RNA polymerase subunit omega (67 aa).

Belongs to the RNA polymerase subunit omega family. In terms of assembly, the RNAP catalytic core consists of 2 alpha, 1 beta, 1 beta' and 1 omega subunit. When a sigma factor is associated with the core the holoenzyme is formed, which can initiate transcription.

The catalysed reaction is RNA(n) + a ribonucleoside 5'-triphosphate = RNA(n+1) + diphosphate. Its function is as follows. Promotes RNA polymerase assembly. Latches the N- and C-terminal regions of the beta' subunit thereby facilitating its interaction with the beta and alpha subunits. In Cupriavidus metallidurans (strain ATCC 43123 / DSM 2839 / NBRC 102507 / CH34) (Ralstonia metallidurans), this protein is DNA-directed RNA polymerase subunit omega.